We begin with the raw amino-acid sequence, 215 residues long: Orotate phosphoribosyltransferase (215 aa).

Lysine 26 contributes to the 5-phospho-alpha-D-ribose 1-diphosphate binding site. 34-35 (FF) contributes to the orotate binding site. 5-phospho-alpha-D-ribose 1-diphosphate is bound by residues 72–73 (YK), arginine 99, lysine 100, lysine 103, histidine 105, and 124–132 (DDVITAGTA). The orotate site is built by threonine 128 and arginine 156.

This sequence belongs to the purine/pyrimidine phosphoribosyltransferase family. PyrE subfamily. In terms of assembly, homodimer. Requires Mg(2+) as cofactor.

It carries out the reaction orotidine 5'-phosphate + diphosphate = orotate + 5-phospho-alpha-D-ribose 1-diphosphate. Its pathway is pyrimidine metabolism; UMP biosynthesis via de novo pathway; UMP from orotate: step 1/2. Catalyzes the transfer of a ribosyl phosphate group from 5-phosphoribose 1-diphosphate to orotate, leading to the formation of orotidine monophosphate (OMP). This Shewanella oneidensis (strain ATCC 700550 / JCM 31522 / CIP 106686 / LMG 19005 / NCIMB 14063 / MR-1) protein is Orotate phosphoribosyltransferase.